The following is a 366-amino-acid chain: tRNA(Met) cytidine acetate ligase (366 aa).

Residues 7–20 (IAEFNPFHNGHKYL), Gly96, Asn152, and Arg175 contribute to the ATP site.

Belongs to the TmcAL family.

The protein localises to the cytoplasm. The enzyme catalyses cytidine(34) in elongator tRNA(Met) + acetate + ATP = N(4)-acetylcytidine(34) in elongator tRNA(Met) + AMP + diphosphate. Catalyzes the formation of N(4)-acetylcytidine (ac(4)C) at the wobble position of elongator tRNA(Met), using acetate and ATP as substrates. First activates an acetate ion to form acetyladenylate (Ac-AMP) and then transfers the acetyl group to tRNA to form ac(4)C34. This Streptococcus mutans serotype c (strain ATCC 700610 / UA159) protein is tRNA(Met) cytidine acetate ligase.